The chain runs to 240 residues: Octanoyltransferase (240 aa).

The region spanning Gly-49–Arg-233 is the BPL/LPL catalytic domain. Substrate contacts are provided by residues Arg-87–His-94, Ala-162–Gly-164, and Gly-175–Ala-177. Cys-193 functions as the Acyl-thioester intermediate in the catalytic mechanism.

This sequence belongs to the LipB family.

The protein localises to the cytoplasm. It catalyses the reaction octanoyl-[ACP] + L-lysyl-[protein] = N(6)-octanoyl-L-lysyl-[protein] + holo-[ACP] + H(+). The protein operates within protein modification; protein lipoylation via endogenous pathway; protein N(6)-(lipoyl)lysine from octanoyl-[acyl-carrier-protein]: step 1/2. Its function is as follows. Catalyzes the transfer of endogenously produced octanoic acid from octanoyl-acyl-carrier-protein onto the lipoyl domains of lipoate-dependent enzymes. Lipoyl-ACP can also act as a substrate although octanoyl-ACP is likely to be the physiological substrate. The sequence is that of Octanoyltransferase from Bradyrhizobium sp. (strain BTAi1 / ATCC BAA-1182).